We begin with the raw amino-acid sequence, 206 residues long: MSYTLPSLPYAYDALEPHFDKQTMEIHHTKHHQTYVNNANAALENLPEFADLPVEELITKLDQVPADKKTVLRNNAGGHANHSLFWKGLKKGTTLQGDLKAAIERDFGSVDNFKAEFEKAAATRFGSGWAWLVLKGDKLAVVSTANQDSPLMGEAISGASGFPILGLDVWEHAYYLKFQNRRPDYIKEFWNVVNWDEAAARFAAKK.

His-27, His-82, Asp-168, and His-172 together coordinate Mn(2+).

It belongs to the iron/manganese superoxide dismutase family. Homodimer. It depends on Mn(2+) as a cofactor.

It carries out the reaction 2 superoxide + 2 H(+) = H2O2 + O2. Destroys superoxide anion radicals which are normally produced within the cells and which are toxic to biological systems. The sequence is that of Superoxide dismutase [Mn] (sodA) from Salmonella typhi.